A 153-amino-acid chain; its full sequence is Ribosome maturation factor RimP (153 aa).

This sequence belongs to the RimP family.

The protein localises to the cytoplasm. Its function is as follows. Required for maturation of 30S ribosomal subunits. This is Ribosome maturation factor RimP from Actinobacillus pleuropneumoniae serotype 5b (strain L20).